The sequence spans 77 residues: Conotoxin PnMKLT1-0122 (77 aa).

Residues 1–22 (MKLTCMMIVAVLFLTAWTFATA) form the signal peptide. Positions 23–49 (EDPRNGLENLFSKAHHEMKNPEDSKLN) are excised as a propeptide. 3 cysteine pairs are disulfide-bonded: Cys-52–Cys-67, Cys-59–Cys-71, and Cys-66–Cys-76.

This sequence belongs to the conotoxin O1 superfamily. In terms of tissue distribution, expressed by the venom duct.

Its subcellular location is the secreted. This Conus pennaceus (Feathered cone) protein is Conotoxin PnMKLT1-0122.